Consider the following 343-residue polypeptide: Flavonoid 3'-O-methyltransferase FOMT (343 aa).

Positions 184, 207, 227, 228, 240, and 241 each coordinate S-adenosyl-L-homocysteine. His-245 serves as the catalytic Proton acceptor. Residues Glu-273 and Glu-305 contribute to the active site.

It belongs to the class I-like SAM-binding methyltransferase superfamily. Cation-independent O-methyltransferase family. Homodimer.

It carries out the reaction 3',5-dihydroxy-3,4',7-trimethoxyflavone + S-adenosyl-L-methionine = 5-hydroxy-3,7,3',4'-tetramethoxyflavone + S-adenosyl-L-homocysteine + H(+). Its pathway is flavonoid metabolism. Its activity is regulated as follows. Inhibited by nickel (NiCl(2) and NiSO(4)) and para-chloromercuribenzoate. Its function is as follows. Catalyzes the 3'- or 5'-O-methylation of partially methylated flavonols, but does not accept quercetin or caffeate as substrates for methylation. The polypeptide is Flavonoid 3'-O-methyltransferase FOMT (Chrysosplenium americanum (American golden saxifrage)).